We begin with the raw amino-acid sequence, 213 residues long: ATP phosphoribosyltransferase (213 aa).

This sequence belongs to the ATP phosphoribosyltransferase family. Short subfamily. Heteromultimer composed of HisG and HisZ subunits.

Its subcellular location is the cytoplasm. The catalysed reaction is 1-(5-phospho-beta-D-ribosyl)-ATP + diphosphate = 5-phospho-alpha-D-ribose 1-diphosphate + ATP. Its pathway is amino-acid biosynthesis; L-histidine biosynthesis; L-histidine from 5-phospho-alpha-D-ribose 1-diphosphate: step 1/9. Catalyzes the condensation of ATP and 5-phosphoribose 1-diphosphate to form N'-(5'-phosphoribosyl)-ATP (PR-ATP). Has a crucial role in the pathway because the rate of histidine biosynthesis seems to be controlled primarily by regulation of HisG enzymatic activity. This Anoxybacillus flavithermus (strain DSM 21510 / WK1) protein is ATP phosphoribosyltransferase.